Consider the following 348-residue polypeptide: Nicotinate-nucleotide--dimethylbenzimidazole phosphoribosyltransferase (348 aa).

Glutamate 316 acts as the Proton acceptor in catalysis.

It belongs to the CobT family.

It carries out the reaction 5,6-dimethylbenzimidazole + nicotinate beta-D-ribonucleotide = alpha-ribazole 5'-phosphate + nicotinate + H(+). It functions in the pathway nucleoside biosynthesis; alpha-ribazole biosynthesis; alpha-ribazole from 5,6-dimethylbenzimidazole: step 1/2. Its function is as follows. Catalyzes the synthesis of alpha-ribazole-5'-phosphate from nicotinate mononucleotide (NAMN) and 5,6-dimethylbenzimidazole (DMB). The chain is Nicotinate-nucleotide--dimethylbenzimidazole phosphoribosyltransferase from Xanthomonas axonopodis pv. citri (strain 306).